Here is a 1393-residue protein sequence, read N- to C-terminus: DNA-directed RNA polymerase subunit beta' (1393 aa).

Zn(2+) is bound by residues cysteine 72, cysteine 74, cysteine 87, and cysteine 90. Residues aspartate 463, aspartate 465, and aspartate 467 each coordinate Mg(2+). Residues cysteine 812, cysteine 887, cysteine 894, and cysteine 897 each contribute to the Zn(2+) site.

It belongs to the RNA polymerase beta' chain family. The RNAP catalytic core consists of 2 alpha, 1 beta, 1 beta' and 1 omega subunit. When a sigma factor is associated with the core the holoenzyme is formed, which can initiate transcription. Mg(2+) is required as a cofactor. It depends on Zn(2+) as a cofactor.

It catalyses the reaction RNA(n) + a ribonucleoside 5'-triphosphate = RNA(n+1) + diphosphate. Its function is as follows. DNA-dependent RNA polymerase catalyzes the transcription of DNA into RNA using the four ribonucleoside triphosphates as substrates. This Chlamydia felis (strain Fe/C-56) (Chlamydophila felis) protein is DNA-directed RNA polymerase subunit beta'.